The primary structure comprises 101 residues: Small ribosomal subunit protein bS18c (101 aa).

This sequence belongs to the bacterial ribosomal protein bS18 family. Part of the 30S ribosomal subunit.

The protein localises to the plastid. Its subcellular location is the chloroplast. The protein is Small ribosomal subunit protein bS18c of Guizotia abyssinica (Niger).